Here is a 248-residue protein sequence, read N- to C-terminus: Methyl-coenzyme M reductase subunit gamma (248 aa).

Arg121 contributes to the coenzyme M binding site.

The protein belongs to the methyl-coenzyme M reductase gamma subunit family. MCR is a hexamer of two alpha, two beta, and two gamma chains, forming a dimer of heterotrimers. It depends on coenzyme F430 as a cofactor.

It localises to the cytoplasm. It carries out the reaction coenzyme B + methyl-coenzyme M = methane + coenzyme M-coenzyme B heterodisulfide. Its pathway is one-carbon metabolism; methyl-coenzyme M reduction; methane from methyl-coenzyme M: step 1/1. Its function is as follows. Component of the methyl-coenzyme M reductase (MCR) I that catalyzes the reductive cleavage of methyl-coenzyme M (CoM-S-CH3 or 2-(methylthio)ethanesulfonate) using coenzyme B (CoB or 7-mercaptoheptanoylthreonine phosphate) as reductant which results in the production of methane and the mixed heterodisulfide of CoB and CoM (CoM-S-S-CoB). This is the final step in methanogenesis. The protein is Methyl-coenzyme M reductase subunit gamma (mcrG) of Methanosarcina barkeri (strain Fusaro / DSM 804).